The following is a 137-amino-acid chain: Glutamate mutase sigma subunit (137 aa).

Residues 3–137 form the B12-binding domain; it reads EVNLVLGVIG…KALKEDLGLM (135 aa). Adenosylcob(III)alamin is bound by residues 13-17, His-16, 61-63, and 93-97; these read ADVHA, SSL, and NLVVG.

Belongs to the methylaspartate mutase GlmS subunit family. Heterotetramer composed of 2 epsilon subunits (GlmE) and 2 sigma subunits (GlmS). GlmE exists as a homodimer and GlmS as a monomer. Adenosylcob(III)alamin is required as a cofactor.

It carries out the reaction (2S,3S)-3-methyl-L-aspartate = L-glutamate. It participates in amino-acid degradation; L-glutamate degradation via mesaconate pathway; acetate and pyruvate from L-glutamate: step 1/4. Its function is as follows. Catalyzes the carbon skeleton rearrangement of L-glutamate to L-threo-3-methylaspartate ((2S,3S)-3-methylaspartate). The protein is Glutamate mutase sigma subunit of Carboxydothermus hydrogenoformans (strain ATCC BAA-161 / DSM 6008 / Z-2901).